Reading from the N-terminus, the 831-residue chain is Periplasmic nitrate reductase (831 aa).

The segment at residues 1–29 is a signal peptide (tat-type signal); sequence MKFTRREFMKAQAAASAAAVAGIALPATA. Residues 41–97 form the 4Fe-4S Mo/W bis-MGD-type domain; sequence IKWEKAPCRFCGTGCSVLVGTQHGRVVATQGDPESPVNKGLNCVKGYFLSKIMYGKD. Residues Cys-48, Cys-51, Cys-55, and Cys-83 each contribute to the [4Fe-4S] cluster site. Residues Lys-85, Gln-152, Asn-177, Cys-181, 214 to 221, 245 to 249, 264 to 266, Met-374, Gln-378, Asn-484, 510 to 511, Lys-533, Asp-560, and 720 to 729 each bind Mo-bis(molybdopterin guanine dinucleotide); these read WGSNMAEM, STYTH, QSD, SD, and TGRVLEHWHS. Trp-796 serves as a coordination point for substrate. Mo-bis(molybdopterin guanine dinucleotide)-binding residues include Asn-804 and Lys-821.

The protein belongs to the prokaryotic molybdopterin-containing oxidoreductase family. NasA/NapA/NarB subfamily. Component of the periplasmic nitrate reductase NapAB complex composed of NapA and NapB. It depends on [4Fe-4S] cluster as a cofactor. Mo-bis(molybdopterin guanine dinucleotide) is required as a cofactor. In terms of processing, predicted to be exported by the Tat system. The position of the signal peptide cleavage has not been experimentally proven.

It is found in the periplasm. The catalysed reaction is 2 Fe(II)-[cytochrome] + nitrate + 2 H(+) = 2 Fe(III)-[cytochrome] + nitrite + H2O. Catalytic subunit of the periplasmic nitrate reductase complex NapAB. Receives electrons from NapB and catalyzes the reduction of nitrate to nitrite. The protein is Periplasmic nitrate reductase of Psychromonas ingrahamii (strain DSM 17664 / CCUG 51855 / 37).